An 855-amino-acid polypeptide reads, in one-letter code: Spindle and centriole-associated protein 1 (855 aa).

The interval 164–200 is disordered; the sequence is QALNDVDGEEEGTVTSQSGESENENELDNSLNSQSNT. Thr-235 carries the post-translational modification Phosphothreonine. The segment covering 300-311 has biased composition (basic residues); the sequence is KPNLHALSKPKK. Positions 300–328 are disordered; that stretch reads KPNLHALSKPKKNMLSGSTTSADLPNRTN. Residues 314 to 328 are compositionally biased toward polar residues; it reads LSGSTTSADLPNRTN. A coiled-coil region spans residues 325–437; sequence NRTNSNLDVL…TQARLRQYMV (113 aa). 2 positions are modified to phosphoserine: Ser-640 and Ser-644. The stretch at 725-751 forms a coiled coil; the sequence is GSMEERIAELNRQSMEARGKLLQLIEQ. Residues Ser-760, Ser-764, and Ser-819 each carry the phosphoserine modification. A disordered region spans residues 789-834; the sequence is EAPESSKCSTVSPVSEINTRRSSGATSNSCSPLNATSGSGRFTPLN. A compositionally biased stretch (polar residues) spans 794-828; that stretch reads SKCSTVSPVSEINTRRSSGATSNSCSPLNATSGSG.

In terms of assembly, interacts with CEP120.

Its subcellular location is the cytoplasm. The protein localises to the cytoskeleton. It localises to the microtubule organizing center. It is found in the centrosome. The protein resides in the centriole. Its subcellular location is the spindle. In terms of biological role, regulator required for centriole duplication, for proper bipolar spindle formation and chromosome congression in mitosis. The chain is Spindle and centriole-associated protein 1 (SPICE1) from Pongo abelii (Sumatran orangutan).